A 157-amino-acid chain; its full sequence is Galactose-specific lectin (157 aa).

The 146-residue stretch at 12–157 (SIVVGTWGAE…LDYIGFHLAL (146 aa)) folds into the Jacalin-type lectin domain. Asparagine 45 carries N-linked (GlcNAc...) asparagine glycosylation.

This sequence belongs to the jacalin lectin family. In terms of assembly, tetramer of heterodimers of light and heavy chains which are non-covalently linked. Post-translationally, N-linked carbohydrates at Asn-45 can be of complex or paucimannose type.

Its function is as follows. Alpha-D-galactose-specific lectin. Has hemagglutinating activity towards human and rabbit erythrocytes. Is highly cytotoxic to human cells in vitro. This chain is Galactose-specific lectin, found in Morus indica (Mulberry).